A 420-amino-acid polypeptide reads, in one-letter code: NEDD8-specific protease 1 (420 aa).

Residues 257–281 (KSSDSSETSHESSNSNLKKSSESGS) are compositionally biased toward low complexity. The disordered stretch occupies residues 257–420 (KSSDSSETSH…EELVSGDFPF (164 aa)). Basic and acidic residues predominate over residues 286-296 (NNHESDKDLHH). Basic residues predominate over residues 297 to 310 (EGHHHHHHHHHHHH). A compositionally biased stretch (basic and acidic residues) spans 311 to 324 (SHDDDPSSPAEKKQ). Residues S329, S340, and S351 each carry the phosphoserine modification. A compositionally biased stretch (basic and acidic residues) spans 355–377 (NKEDHLPLLSDEKLDKSAIDKIE).

It belongs to the peptidase C48 family. As to quaternary structure, interacts with csn1. It is, however, not a component of the signalosome.

It is found in the cytoplasm. Its function is as follows. Protease that catalyzes two essential functions in the NEDD8 pathway: processing of full-length NEDD8 to its mature form and deconjugation of NEDD8 from targeted proteins such as the pcu1, pcu2 and pcu4 cullins and other proteins. This Schizosaccharomyces pombe (strain 972 / ATCC 24843) (Fission yeast) protein is NEDD8-specific protease 1 (nep1).